A 526-amino-acid polypeptide reads, in one-letter code: Acetyl-CoA hydrolase (526 aa).

At T2 the chain carries N-acetylthreonine. CoA is bound at residue 277–281 (GIGNI). The active-site 5-glutamyl coenzyme A thioester intermediate is the E302. The residue at position 350 (S350) is a Phosphoserine. Residues N392 and G396 each contribute to the CoA site.

The protein belongs to the acetyl-CoA hydrolase/transferase family. In terms of assembly, monomer. In terms of processing, glycosylated; contains mannose.

Its subcellular location is the cytoplasm. The catalysed reaction is acetyl-CoA + H2O = acetate + CoA + H(+). Functionally, presumably involved in regulating the intracellular acetyl-CoA pool for fatty acid and cholesterol synthesis and fatty acid oxidation. It may be involved in overall regulation of acetylation during melatonin synthesis. The protein is Acetyl-CoA hydrolase (ACH1) of Saccharomyces cerevisiae (strain ATCC 204508 / S288c) (Baker's yeast).